Consider the following 430-residue polypeptide: Enolase (430 aa).

Glutamine 163 is a (2R)-2-phosphoglycerate binding site. The active-site Proton donor is the glutamate 205. Positions 242, 288, and 315 each coordinate Mg(2+). (2R)-2-phosphoglycerate contacts are provided by lysine 340, arginine 369, serine 370, and lysine 391. Lysine 340 acts as the Proton acceptor in catalysis.

This sequence belongs to the enolase family. Requires Mg(2+) as cofactor.

It localises to the cytoplasm. Its subcellular location is the secreted. It is found in the cell surface. It carries out the reaction (2R)-2-phosphoglycerate = phosphoenolpyruvate + H2O. The protein operates within carbohydrate degradation; glycolysis; pyruvate from D-glyceraldehyde 3-phosphate: step 4/5. Catalyzes the reversible conversion of 2-phosphoglycerate (2-PG) into phosphoenolpyruvate (PEP). It is essential for the degradation of carbohydrates via glycolysis. In Onion yellows phytoplasma (strain OY-M), this protein is Enolase.